A 1222-amino-acid polypeptide reads, in one-letter code: Deubiquitinating protein VCPIP1 (1222 aa).

Over residues 1 to 21 the composition is skewed to pro residues; it reads MSQPPPPPPPLPPPPPPPEAP. The segment at 1–36 is disordered; it reads MSQPPPPPPPLPPPPPPPEAPQTPSSLASAAASGGL. Positions 25 to 36 are enriched in low complexity; that stretch reads SSLASAAASGGL. Residues 208 to 361 form the OTU domain; sequence LIPVHVDGDG…RNHYIPLVGI (154 aa). D216 is an active-site residue. Residue C219 is the Nucleophile of the active site. H354 is an active-site residue. K408 carries the N6-acetyllysine modification. Disordered stretches follow at residues 725 to 776, 989 to 1009, and 1024 to 1074; these read SVMQ…KEKK, EATT…LGSG, and AFQG…VFTA. 2 positions are modified to phosphoserine: S747 and S757. Residues 755 to 771 show a composition bias toward low complexity; the sequence is PSSAPATPTKAPYSPTT. Residue T763 is modified to Phosphothreonine. A phosphoserine mark is found at S768, S994, and S998. Over residues 1041-1050 the composition is skewed to basic and acidic residues; it reads LDPRARETSV. Positions 1057–1074 are enriched in polar residues; the sequence is GTDFSNSSTKTEPSVFTA. Phosphoserine is present on S1077. Disordered regions lie at residues 1113–1175 and 1188–1222; these read VSSI…TETT and ATRS…MDHS. Positions 1143 to 1157 are enriched in polar residues; the sequence is VVSSSAKSGSLQTGL. Low complexity predominate over residues 1163–1175; that stretch reads LTGGTENLNTETT. Position 1198 is a phosphoserine (S1198). Positions 1200 to 1209 are enriched in acidic residues; it reads EELEEMDSQD. At S1207 the chain carries Phosphoserine; by ATM. Polar residues predominate over residues 1210-1222; that stretch reads AEMTNTTEPMDHS.

Binds VCP and the ternary complex containing STX5A, NSFL1C and VCP. Phosphorylated at Ser-1207 by ATM or ATR following induction of covalent DNA-protein cross-links (DPCs).

Its subcellular location is the nucleus. The protein resides in the cytoplasm. The protein localises to the endoplasmic reticulum. It localises to the golgi apparatus. It is found in the golgi stack. The enzyme catalyses Thiol-dependent hydrolysis of ester, thioester, amide, peptide and isopeptide bonds formed by the C-terminal Gly of ubiquitin (a 76-residue protein attached to proteins as an intracellular targeting signal).. Deubiquitinating enzyme involved in DNA repair and reassembly of the Golgi apparatus and the endoplasmic reticulum following mitosis. Necessary for VCP-mediated reassembly of Golgi stacks after mitosis. Plays a role in VCP-mediated formation of transitional endoplasmic reticulum (tER). Mediates dissociation of the ternary complex containing STX5A, NSFL1C and VCP. Also involved in DNA repair following phosphorylation by ATM or ATR: acts by catalyzing deubiquitination of SPRTN, thereby promoting SPRTN recruitment to chromatin and subsequent proteolytic cleavage of covalent DNA-protein cross-links (DPCs). Hydrolyzes 'Lys-11'- and 'Lys-48'-linked polyubiquitin chains. Functionally, (Microbial infection) Regulates the duration of C.botulinum neurotoxin type A (BoNT/A) intoxication by catalyzing deubiquitination of Botulinum neurotoxin A light chain (LC), thereby preventing LC degradation by the proteasome, and accelerating botulinum neurotoxin intoxication in patients. The sequence is that of Deubiquitinating protein VCPIP1 from Homo sapiens (Human).